We begin with the raw amino-acid sequence, 484 residues long: Glutamate--tRNA ligase (484 aa).

The short motif at 12-22 is the 'HIGH' region element; it reads PSPTGEPHVGT. The 'KMSKS' region motif lies at 253-257; the sequence is KLSKR. K256 provides a ligand contact to ATP.

Belongs to the class-I aminoacyl-tRNA synthetase family. Glutamate--tRNA ligase type 1 subfamily. Monomer.

The protein resides in the cytoplasm. The catalysed reaction is tRNA(Glu) + L-glutamate + ATP = L-glutamyl-tRNA(Glu) + AMP + diphosphate. In terms of biological role, catalyzes the attachment of glutamate to tRNA(Glu) in a two-step reaction: glutamate is first activated by ATP to form Glu-AMP and then transferred to the acceptor end of tRNA(Glu). This Rhizobium leguminosarum bv. trifolii (strain WSM2304) protein is Glutamate--tRNA ligase.